Reading from the N-terminus, the 249-residue chain is Proline-rich antigen (249 aa).

2 stretches are compositionally biased toward pro residues: residues 1–20 (MTDQ…PPPG) and 38–87 (YPPP…PPGP). The tract at residues 1–87 (MTDQPPPSGS…GAYAPPPPGP (87 aa)) is disordered. Residues 34–43 (LGSAYPPPTA) form a 1-1; approximate repeat. The 5 X 10 AA tandem repeats of [PV]-G-G-S-Y-P-P-P-P-P stretch occupies residues 34-85 (LGSAYPPPTAPPVGGSYPPPPPPGGSYPPPPPPGGSYPPPPPSTGAYAPPPP). A run of 3 repeats spans residues 46–55 (VGGSYPPPPP), 56–65 (PGGSYPPPPP), and 66–75 (PGGSYPPPPP). A 1-5; approximate repeat occupies 76 to 85 (STGAYAPPPP). An RDD domain is found at 99 to 242 (FWVTRVLAYV…KRQTLADKIM (144 aa)). 2 repeat units span residues 101 to 123 (VTRV…IGML) and 134 to 156 (VTDI…IGML). The segment at 101 to 156 (VTRVLAYVIDNIPATVLLGIGMLIQTLTKQEACVTDITQYNVNQYCATQPTGIGML) is 2 X 23 AA approximate repeats. 3 helical membrane-spanning segments follow: residues 104–124 (VLAY…GMLI), 151–171 (TGIG…YLVW), and 212–232 (LAHF…LWDS).

This sequence belongs to the mycobacterial Pra family.

The protein resides in the cell membrane. This chain is Proline-rich antigen (ag36), found in Mycobacterium leprae (strain TN).